The primary structure comprises 438 residues: Drainin (438 aa).

A coiled-coil region spans residues 54-104 (PKSQEEVLKHQREYEEIQRKAKKTLEREAKEKEKLDAIRKEKERSLIDARK). Residues 133 to 374 (GLPPAVRGKI…RIWDLVFIEG (242 aa)) form the Rab-GAP TBC domain.

It localises to the contractile vacuole membrane. Its subcellular location is the cytoplasm. Functionally, may act as a GTPase-activating protein for Rab family protein(s). Required for osmotic regulation by the contractile vacuole in hypo-osmotic environments. Essential for periodic fusion of the contractile vacuole with the plasma membrane and consequent expulsion of water from the cell body. The protein is Drainin (phgA) of Dictyostelium discoideum (Social amoeba).